We begin with the raw amino-acid sequence, 440 residues long: tRNA(Ile)-lysidine synthase (440 aa).

31 to 36 contributes to the ATP binding site; the sequence is SGGADS.

This sequence belongs to the tRNA(Ile)-lysidine synthase family.

It localises to the cytoplasm. It carries out the reaction cytidine(34) in tRNA(Ile2) + L-lysine + ATP = lysidine(34) in tRNA(Ile2) + AMP + diphosphate + H(+). Ligates lysine onto the cytidine present at position 34 of the AUA codon-specific tRNA(Ile) that contains the anticodon CAU, in an ATP-dependent manner. Cytidine is converted to lysidine, thus changing the amino acid specificity of the tRNA from methionine to isoleucine. This chain is tRNA(Ile)-lysidine synthase, found in Borrelia garinii subsp. bavariensis (strain ATCC BAA-2496 / DSM 23469 / PBi) (Borreliella bavariensis).